A 612-amino-acid polypeptide reads, in one-letter code: Dihydroxy-acid dehydratase (612 aa).

Asp-81 contributes to the Mg(2+) binding site. Position 122 (Cys-122) interacts with [2Fe-2S] cluster. Mg(2+) contacts are provided by Asp-123 and Lys-124. At Lys-124 the chain carries N6-carboxylysine. [2Fe-2S] cluster is bound at residue Cys-196. Residue Glu-492 coordinates Mg(2+). The active-site Proton acceptor is Ser-518.

Belongs to the IlvD/Edd family. Homodimer. The cofactor is [2Fe-2S] cluster. Mg(2+) serves as cofactor.

The enzyme catalyses (2R)-2,3-dihydroxy-3-methylbutanoate = 3-methyl-2-oxobutanoate + H2O. It carries out the reaction (2R,3R)-2,3-dihydroxy-3-methylpentanoate = (S)-3-methyl-2-oxopentanoate + H2O. It functions in the pathway amino-acid biosynthesis; L-isoleucine biosynthesis; L-isoleucine from 2-oxobutanoate: step 3/4. The protein operates within amino-acid biosynthesis; L-valine biosynthesis; L-valine from pyruvate: step 3/4. Its function is as follows. Functions in the biosynthesis of branched-chain amino acids. Catalyzes the dehydration of (2R,3R)-2,3-dihydroxy-3-methylpentanoate (2,3-dihydroxy-3-methylvalerate) into 2-oxo-3-methylpentanoate (2-oxo-3-methylvalerate) and of (2R)-2,3-dihydroxy-3-methylbutanoate (2,3-dihydroxyisovalerate) into 2-oxo-3-methylbutanoate (2-oxoisovalerate), the penultimate precursor to L-isoleucine and L-valine, respectively. This chain is Dihydroxy-acid dehydratase, found in Cereibacter sphaeroides (strain ATCC 17029 / ATH 2.4.9) (Rhodobacter sphaeroides).